The following is a 383-amino-acid chain: 8-amino-7-oxononanoate synthase (383 aa).

Arginine 21 is a substrate binding site. Glycine 108 to tyrosine 109 lines the pyridoxal 5'-phosphate pocket. Histidine 133 lines the substrate pocket. Positions 179, 207, and 233 each coordinate pyridoxal 5'-phosphate. Lysine 236 is modified (N6-(pyridoxal phosphate)lysine). Threonine 350 provides a ligand contact to substrate.

The protein belongs to the class-II pyridoxal-phosphate-dependent aminotransferase family. BioF subfamily. As to quaternary structure, homodimer. It depends on pyridoxal 5'-phosphate as a cofactor.

It catalyses the reaction 6-carboxyhexanoyl-[ACP] + L-alanine + H(+) = (8S)-8-amino-7-oxononanoate + holo-[ACP] + CO2. Its pathway is cofactor biosynthesis; biotin biosynthesis. Its function is as follows. Catalyzes the decarboxylative condensation of pimeloyl-[acyl-carrier protein] and L-alanine to produce 8-amino-7-oxononanoate (AON), [acyl-carrier protein], and carbon dioxide. This is 8-amino-7-oxononanoate synthase from Photorhabdus laumondii subsp. laumondii (strain DSM 15139 / CIP 105565 / TT01) (Photorhabdus luminescens subsp. laumondii).